Reading from the N-terminus, the 226-residue chain is uncharacterized protein (226 aa).

The chain crosses the membrane as a helical span at residues 5-25; sequence IKTVSFAAAAILVVIICTFLI.

The protein localises to the cell membrane. This is an uncharacterized protein from Bacillus subtilis (strain 168).